Here is a 125-residue protein sequence, read N- to C-terminus: Protein ApaG (125 aa).

The 125-residue stretch at 1–125 folds into the ApaG domain; it reads MINSPRVCVQ…FRLAIPSLIN (125 aa).

In Sodalis glossinidius (strain morsitans), this protein is Protein ApaG.